Reading from the N-terminus, the 418-residue chain is Serpin H1 (418 aa).

A signal peptide spans 1–18 (MRALLLISTICLLARALA). The residue at position 94 (Lys-94) is an N6-succinyllysine. Asn-120 and Asn-125 each carry an N-linked (GlcNAc...) asparagine glycan. Ser-141 bears the Phosphoserine mark. Position 207 is an N6-acetyllysine (Lys-207). Lys-296 carries the post-translational modification N6-succinyllysine. Lys-319 carries the post-translational modification N6-acetyllysine. A Prevents secretion from ER motif is present at residues 415–418 (RDEL).

The protein belongs to the serpin family.

Its subcellular location is the endoplasmic reticulum lumen. Binds specifically to collagen. Could be involved as a chaperone in the biosynthetic pathway of collagen. The protein is Serpin H1 (SERPINH1) of Bos taurus (Bovine).